Consider the following 159-residue polypeptide: Phosphopantetheine adenylyltransferase (159 aa).

Ser-9 is a binding site for substrate. ATP-binding positions include 9-10 and His-17; that span reads SF. The substrate site is built by Lys-41, Leu-73, and Lys-87. Residues 88–90, Glu-98, and 123–129 contribute to the ATP site; these read GLR and YSYLSSS.

It belongs to the bacterial CoaD family. In terms of assembly, homohexamer. The cofactor is Mg(2+).

The protein localises to the cytoplasm. The enzyme catalyses (R)-4'-phosphopantetheine + ATP + H(+) = 3'-dephospho-CoA + diphosphate. The protein operates within cofactor biosynthesis; coenzyme A biosynthesis; CoA from (R)-pantothenate: step 4/5. Reversibly transfers an adenylyl group from ATP to 4'-phosphopantetheine, yielding dephospho-CoA (dPCoA) and pyrophosphate. The chain is Phosphopantetheine adenylyltransferase from Clostridium botulinum (strain Eklund 17B / Type B).